Consider the following 278-residue polypeptide: Large ribosomal subunit protein uL2 (278 aa).

2 disordered regions span residues 29–57 (PEKS…QGGG) and 224–278 (VAMN…NKKR). Residues 258-278 (RSPKKASNKYIVRRRKTNKKR) are compositionally biased toward basic residues.

Belongs to the universal ribosomal protein uL2 family. In terms of assembly, part of the 50S ribosomal subunit. Forms a bridge to the 30S subunit in the 70S ribosome.

One of the primary rRNA binding proteins. Required for association of the 30S and 50S subunits to form the 70S ribosome, for tRNA binding and peptide bond formation. It has been suggested to have peptidyltransferase activity; this is somewhat controversial. Makes several contacts with the 16S rRNA in the 70S ribosome. In Streptomyces griseus subsp. griseus (strain JCM 4626 / CBS 651.72 / NBRC 13350 / KCC S-0626 / ISP 5235), this protein is Large ribosomal subunit protein uL2.